We begin with the raw amino-acid sequence, 166 residues long: Cofilin-1 (166 aa).

N-acetylalanine is present on alanine 2. Phosphoserine occurs at positions 3 and 8. An ADF-H domain is found at 4 to 153 (GVAVSDGVIK…KDRCTLAEKL (150 aa)). Position 13 is an N6-acetyllysine (lysine 13). Threonine 25 bears the Phosphothreonine mark. The Nuclear localization signal motif lies at 30 to 34 (KKRKK). At serine 41 the chain carries Phosphoserine. At tyrosine 68 the chain carries Phosphotyrosine. Lysine 73 carries the post-translational modification N6-acetyllysine. Lysine 132 participates in a covalent cross-link: Glycyl lysine isopeptide (Lys-Gly) (interchain with G-Cter in SUMO2). Phosphotyrosine is present on tyrosine 140. N6-acetyllysine is present on lysine 144. Phosphoserine is present on serine 156.

Belongs to the actin-binding proteins ADF family. As to quaternary structure, can bind G- and F-actin in a 1:1 ratio of cofilin to actin. It is a major component of intranuclear and cytoplasmic actin rods. Interacts with the subcortical maternal complex (SCMC) via interaction with TLE6 and NLRP5. Interacts with C9orf72. Post-translationally, inactivated by phosphorylation on Ser-3. Phosphorylated on Ser-3 in resting cells. Dephosphorylated by PDXP/chronophin; this restores its activity in promoting actin filament depolymerization. The phosphorylation of Ser-24 may prevent recognition of the nuclear localization signal. Phosphorylated via a ARRB1-RAC1-LIMK1-PAK1 cascade upon active ligand stimulation of atypical chemokine receptor ACKR2.

The protein resides in the nucleus matrix. It localises to the cytoplasm. It is found in the cytoskeleton. Its subcellular location is the cell projection. The protein localises to the ruffle membrane. The protein resides in the lamellipodium membrane. It localises to the lamellipodium. It is found in the growth cone. Its subcellular location is the axon. Its function is as follows. Binds to F-actin and exhibits pH-sensitive F-actin depolymerizing activity. Important for normal progress through mitosis and normal cytokinesis. In conjunction with the subcortical maternal complex (SCMC), plays an essential role for zygotes to progress beyond the first embryonic cell divisions via regulation of actin dynamics. Required for the centralization of the mitotic spindle and symmetric division of zygotes. Plays a role in the regulation of cell morphology and cytoskeletal organization in epithelial cells. Required for the up-regulation of atypical chemokine receptor ACKR2 from endosomal compartment to cell membrane, increasing its efficiency in chemokine uptake and degradation. Required for neural tube morphogenesis and neural crest cell migration. In Rattus norvegicus (Rat), this protein is Cofilin-1 (Cfl1).